The sequence spans 1065 residues: Carbamoyl phosphate synthase large chain (1065 aa).

A carboxyphosphate synthetic domain region spans residues Met1–Glu401. ATP-binding residues include Arg129, Arg169, Gly175, Gly176, Gln208, Val210, Glu215, Gly241, Val242, His243, Gln284, and Glu298. The ATP-grasp 1 domain maps to Lys133 to Val327. Mg(2+) contacts are provided by Gln284, Glu298, and Asn300. The Mn(2+) site is built by Gln284, Glu298, and Asn300. Residues Gly402 to Asn548 are oligomerization domain. A carbamoyl phosphate synthetic domain region spans residues Glu549–Gly931. Residues Ser673–Thr863 form the ATP-grasp 2 domain. ATP is bound by residues Arg709, Lys748, Ile750, Glu754, Gly779, Val780, His781, Ser782, Gln822, and Glu834. Positions 822, 834, and 836 each coordinate Mg(2+). Residues Gln822, Glu834, and Asn836 each coordinate Mn(2+). The MGS-like domain maps to Ile932–Lys1065. An allosteric domain region spans residues Ile932–Lys1065.

The protein belongs to the CarB family. Composed of two chains; the small (or glutamine) chain promotes the hydrolysis of glutamine to ammonia, which is used by the large (or ammonia) chain to synthesize carbamoyl phosphate. Tetramer of heterodimers (alpha,beta)4. Requires Mg(2+) as cofactor. The cofactor is Mn(2+).

The catalysed reaction is hydrogencarbonate + L-glutamine + 2 ATP + H2O = carbamoyl phosphate + L-glutamate + 2 ADP + phosphate + 2 H(+). It carries out the reaction hydrogencarbonate + NH4(+) + 2 ATP = carbamoyl phosphate + 2 ADP + phosphate + 2 H(+). The protein operates within amino-acid biosynthesis; L-arginine biosynthesis; carbamoyl phosphate from bicarbonate: step 1/1. It participates in pyrimidine metabolism; UMP biosynthesis via de novo pathway; (S)-dihydroorotate from bicarbonate: step 1/3. In terms of biological role, large subunit of the glutamine-dependent carbamoyl phosphate synthetase (CPSase). CPSase catalyzes the formation of carbamoyl phosphate from the ammonia moiety of glutamine, carbonate, and phosphate donated by ATP, constituting the first step of 2 biosynthetic pathways, one leading to arginine and/or urea and the other to pyrimidine nucleotides. The large subunit (synthetase) binds the substrates ammonia (free or transferred from glutamine from the small subunit), hydrogencarbonate and ATP and carries out an ATP-coupled ligase reaction, activating hydrogencarbonate by forming carboxy phosphate which reacts with ammonia to form carbamoyl phosphate. The sequence is that of Carbamoyl phosphate synthase large chain from Clostridium acetobutylicum (strain ATCC 824 / DSM 792 / JCM 1419 / IAM 19013 / LMG 5710 / NBRC 13948 / NRRL B-527 / VKM B-1787 / 2291 / W).